Consider the following 620-residue polypeptide: Siderophore iron transporter ARN2 (620 aa).

Residues 1-42 (MIEVPEDNRSSQTKRKNTEKNCNELMVDEKMDDDSSPRDEMK) are disordered. The segment covering 16–42 (KNTEKNCNELMVDEKMDDDSSPRDEMK) has biased composition (basic and acidic residues). 14 consecutive transmembrane segments (helical) span residues 71 to 93 (IFLF…RGTY), 106 to 128 (LIST…FGGL), 135 to 152 (LTLF…TIIQ), 162 to 184 (AAGA…LMLS), 191 to 213 (WRLF…SGSV), 223 to 245 (WSWN…ILCM), 286 to 308 (VVGV…LAGG), 318 to 335 (IIGP…FIYW), 355 to 377 (VWAP…GYLY), 392 to 414 (TRII…LIVT), 421 to 438 (SYII…GLFY), 448 to 470 (GGII…PTIV), 491 to 513 (VFRI…SLYP), and 561 to 578 (VIVA…TFCV).

Belongs to the major facilitator superfamily.

The protein resides in the endosome membrane. In terms of biological role, involved in the transport of siderophore triacestylfusarinine C and so has a role in iron homeostasis. This Saccharomyces cerevisiae (strain ATCC 204508 / S288c) (Baker's yeast) protein is Siderophore iron transporter ARN2 (ARN2).